The sequence spans 192 residues: MKIGILALQGAFAEHARMLEKLGIESVELRNLKNFQQHYSDLSGLILPGGESTAIGKLLRELYMLEPIKQAISSGFPVFGTCAGLILLAKEITSQKESHFGTMDIVVERNAYGRQLGSFYTEADCKGVGKIPMTFIRGPIISSVGKKVNILATVNNKIVAAQEKNMLVTSFHPELTNNLSLHKYFIDICKVA.

50 to 52 (GES) contacts L-glutamine. Cys-82 acts as the Nucleophile in catalysis. Residues Arg-109 and 136–137 (IR) each bind L-glutamine. Catalysis depends on charge relay system residues His-172 and Glu-174.

It belongs to the glutaminase PdxT/SNO family. In terms of assembly, in the presence of PdxS, forms a dodecamer of heterodimers. Only shows activity in the heterodimer.

The catalysed reaction is aldehydo-D-ribose 5-phosphate + D-glyceraldehyde 3-phosphate + L-glutamine = pyridoxal 5'-phosphate + L-glutamate + phosphate + 3 H2O + H(+). It carries out the reaction L-glutamine + H2O = L-glutamate + NH4(+). It functions in the pathway cofactor biosynthesis; pyridoxal 5'-phosphate biosynthesis. In terms of biological role, catalyzes the hydrolysis of glutamine to glutamate and ammonia as part of the biosynthesis of pyridoxal 5'-phosphate. The resulting ammonia molecule is channeled to the active site of PdxS. The sequence is that of Pyridoxal 5'-phosphate synthase subunit PdxT from Haemophilus influenzae (strain PittEE).